Consider the following 174-residue polypeptide: Solute carrier family 2, facilitated glucose transporter member 4 (174 aa).

Residues 1 to 19 (QQIGSEDGEPPQQRVTGTL) lie on the Cytoplasmic side of the membrane. The tract at residues 2–8 (QIGSEDG) is interaction with SRFBP1. Position 5 is a phosphoserine (S5). Residues 20–40 (VLAVFSAVLGSLQFGYNIGVI) traverse the membrane as a helical segment. At 41 to 76 (NAPQKVIEQSYNETWLGRQGPNGPGSIPPGTLTTLW) the chain is on the extracellular side. N-linked (GlcNAc...) asparagine glycosylation occurs at N52. Residues 77 to 97 (ALSVAIFSVGGMFSSFLLGII) traverse the membrane as a helical segment. At 98 to 114 (SQWLGRKKAMLFNNTLA) the chain is on the cytoplasmic side. A helical transmembrane segment spans residues 115–135 (VLAGALMGLAKAAASYEMLIL). Residues 136–137 (GR) lie on the Extracellular side of the membrane. Residues 138–158 (FLIGAYSGLASGLVPMYVGEI) form a helical membrane-spanning segment. The Cytoplasmic segment spans residues 159–166 (APTHLRGA). Residues 167-174 (LGTLNQLA) traverse the membrane as a helical segment.

Belongs to the major facilitator superfamily. Sugar transporter (TC 2.A.1.1) family. Glucose transporter subfamily. Binds to DAXX. Interacts via its N-terminus with SRFBP1. Interacts with NDUFA9. Interacts with TRARG1; the interaction is required for proper SLC2A4 recycling after insulin stimulation. Sumoylated. In terms of processing, palmitoylated. Palmitoylation by ZDHHC7 controls the insulin-dependent translocation of GLUT4 to the plasma membrane.

The protein resides in the cell membrane. Its subcellular location is the endomembrane system. It is found in the cytoplasm. It localises to the perinuclear region. It catalyses the reaction D-glucose(out) = D-glucose(in). Its function is as follows. Insulin-regulated facilitative glucose transporter, which plays a key role in removal of glucose from circulation. Response to insulin is regulated by its intracellular localization: in the absence of insulin, it is efficiently retained intracellularly within storage compartments in muscle and fat cells. Upon insulin stimulation, translocates from these compartments to the cell surface where it transports glucose from the extracellular milieu into the cell. In Sus scrofa (Pig), this protein is Solute carrier family 2, facilitated glucose transporter member 4.